Consider the following 553-residue polypeptide: CDP-diacylglycerol--glycerol-3-phosphate 3-phosphatidyltransferase, mitochondrial (553 aa).

The N-terminal 25 residues, 1-25, are a transit peptide targeting the mitochondrion; it reads MAAPAAGPVFWRRLLGLLPGRPGLA. The residue at position 46 (serine 46) is a Phosphoserine. 121-128 provides a ligand contact to ATP; it reads ASLYLGTG. PLD phosphodiesterase domains lie at 212–238 and 457–490; these read TIGLQHIKVYLFDNNVVLSGANLSDSY and TGWTFHAKGLWLYLAGSSLPCLTLIGSPNFGYRS. Catalysis depends on residues histidine 217, lysine 219, and aspartate 224.

It belongs to the CDP-alcohol phosphatidyltransferase class-II family.

It is found in the mitochondrion. It carries out the reaction a CDP-1,2-diacyl-sn-glycerol + sn-glycerol 3-phosphate = a 1,2-diacyl-sn-glycero-3-phospho-(1'-sn-glycero-3'-phosphate) + CMP + H(+). The protein operates within phospholipid metabolism; phosphatidylglycerol biosynthesis; phosphatidylglycerol from CDP-diacylglycerol: step 1/2. With respect to regulation, activated by calcium and magnesium and inhibited by other bivalent cations. Its function is as follows. Functions in the biosynthesis of the anionic phospholipids phosphatidylglycerol and cardiolipin. This chain is CDP-diacylglycerol--glycerol-3-phosphate 3-phosphatidyltransferase, mitochondrial (PGS1), found in Cricetulus griseus (Chinese hamster).